The primary structure comprises 95 residues: Small ribosomal subunit protein mS37 (95 aa).

The CHCH domain occupies 27–69 (ANRCLVLMSNLLQCWSSNGHMNPVCEKLATDLKACTSQNVMGS). 2 short sequence motifs (cx9C motif) span residues 30-40 (CLVLMSNLLQC) and 51-61 (CEKLATDLKAC). Cystine bridges form between Cys30–Cys61 and Cys40–Cys51.

Belongs to the mitochondrion-specific ribosomal protein mS37 family. In terms of assembly, component of the mitochondrial small ribosomal subunit.

The protein resides in the mitochondrion. In terms of biological role, involved in mitochondrial genome encoded proteins translation. This is Small ribosomal subunit protein mS37 (MRP10) from Eremothecium gossypii (strain ATCC 10895 / CBS 109.51 / FGSC 9923 / NRRL Y-1056) (Yeast).